A 449-amino-acid polypeptide reads, in one-letter code: Tryptophan--tRNA ligase (449 aa).

ATP contacts are provided by residues 10-12 and 18-19; these read TTT and GN. The short motif at 11-19 is the 'HIGH' region element; sequence TTGTPHLGN. D143 contacts L-tryptophan. ATP is bound by residues 155–157, L197, and 204–208; these read GRD and KMSKS. The 'KMSKS' region motif lies at 204 to 208; it reads KMSKS.

The protein belongs to the class-I aminoacyl-tRNA synthetase family. As to quaternary structure, homodimer.

Its subcellular location is the cytoplasm. It catalyses the reaction tRNA(Trp) + L-tryptophan + ATP = L-tryptophyl-tRNA(Trp) + AMP + diphosphate + H(+). Functionally, catalyzes the attachment of tryptophan to tRNA(Trp). The polypeptide is Tryptophan--tRNA ligase (Pseudomonas putida (strain ATCC 47054 / DSM 6125 / CFBP 8728 / NCIMB 11950 / KT2440)).